A 339-amino-acid chain; its full sequence is Uroporphyrinogen decarboxylase (339 aa).

Residues 21–25 (RQAGR), phenylalanine 40, aspartate 71, tyrosine 147, serine 202, and histidine 315 each bind substrate.

This sequence belongs to the uroporphyrinogen decarboxylase family. In terms of assembly, homodimer.

It is found in the cytoplasm. The enzyme catalyses uroporphyrinogen III + 4 H(+) = coproporphyrinogen III + 4 CO2. It functions in the pathway porphyrin-containing compound metabolism; protoporphyrin-IX biosynthesis; coproporphyrinogen-III from 5-aminolevulinate: step 4/4. In terms of biological role, catalyzes the decarboxylation of four acetate groups of uroporphyrinogen-III to yield coproporphyrinogen-III. This chain is Uroporphyrinogen decarboxylase, found in Helicobacter pylori (strain ATCC 700392 / 26695) (Campylobacter pylori).